We begin with the raw amino-acid sequence, 361 residues long: Aromatic amino acid aminotransferase (361 aa).

Lysine 221 is subject to N6-(pyridoxal phosphate)lysine.

This sequence belongs to the class-II pyridoxal-phosphate-dependent aminotransferase family. As to quaternary structure, homodimer. Pyridoxal 5'-phosphate is required as a cofactor.

The enzyme catalyses an aromatic L-alpha-amino acid + 2-oxoglutarate = an aromatic oxo-acid + L-glutamate. Functionally, aminotransferase that catalyzes the conversion of aromatic amino acids and 2-oxoglutarate into corresponding aromatic oxo acids and L-glutamate. In Mycobacterium ulcerans (strain Agy99), this protein is Aromatic amino acid aminotransferase.